A 262-amino-acid polypeptide reads, in one-letter code: 4-hydroxy-tetrahydrodipicolinate reductase (262 aa).

An NAD(+)-binding site is contributed by 9-14 (GCLGRM). Arginine 36 contacts NADP(+). Residues 100–102 (GTT) and 121–124 (SANM) contribute to the NAD(+) site. Histidine 154 functions as the Proton donor/acceptor in the catalytic mechanism. Residue histidine 155 coordinates (S)-2,3,4,5-tetrahydrodipicolinate. Catalysis depends on lysine 158, which acts as the Proton donor. A (S)-2,3,4,5-tetrahydrodipicolinate-binding site is contributed by 164-165 (GT).

This sequence belongs to the DapB family.

It is found in the cytoplasm. It catalyses the reaction (S)-2,3,4,5-tetrahydrodipicolinate + NAD(+) + H2O = (2S,4S)-4-hydroxy-2,3,4,5-tetrahydrodipicolinate + NADH + H(+). The catalysed reaction is (S)-2,3,4,5-tetrahydrodipicolinate + NADP(+) + H2O = (2S,4S)-4-hydroxy-2,3,4,5-tetrahydrodipicolinate + NADPH + H(+). It participates in amino-acid biosynthesis; L-lysine biosynthesis via DAP pathway; (S)-tetrahydrodipicolinate from L-aspartate: step 4/4. Functionally, catalyzes the conversion of 4-hydroxy-tetrahydrodipicolinate (HTPA) to tetrahydrodipicolinate. This Wolbachia pipientis subsp. Culex pipiens (strain wPip) protein is 4-hydroxy-tetrahydrodipicolinate reductase.